The chain runs to 314 residues: Probable phytol kinase 1, chloroplastic (314 aa).

A chloroplast-targeting transit peptide spans 1–62 (MAAAARPVDV…GVGAAAAPAV (62 aa)). Helical transmembrane passes span 72–91 (AALRDCAATLLITAGAYSLV), 111–131 (IVHVLSGVLFMSSWPLFSNST), 135–155 (FFAAIVPLLNCIRLLTYGLRL), 181–201 (YVIVLLVSVLVFWRQSPIGIV), 234–254 (IGSISMFISGFLLSALMLFYF), 266–286 (LALGKLALVALAATVVECIPV), and 294–314 (ISVPLATMLAAYLLFGYSSCC).

This sequence belongs to the polyprenol kinase family.

The protein localises to the plastid. The protein resides in the chloroplast membrane. It catalyses the reaction phytol + CTP = phytyl phosphate + CDP + H(+). It participates in cofactor biosynthesis; tocopherol biosynthesis. Involved in the activation and reutilization of phytol from chlorophyll degradation in plant metabolism, including tocopherol biosynthesis. Catalyzes the conversion of phytol to phytol monophosphate (PMP). The protein is Probable phytol kinase 1, chloroplastic of Oryza sativa subsp. japonica (Rice).